Here is a 117-residue protein sequence, read N- to C-terminus: NADH dehydrogenase [ubiquinone] 1 beta subcomplex subunit 9 (117 aa).

At Ser-2 the chain carries N-acetylserine.

Belongs to the complex I LYR family. In terms of assembly, complex I is composed of at least 49 different subunits. Expressed in roots, stems, flowers, rosette leaves, cauline leaves and siliques, with the highest expression in the stems.

The protein resides in the mitochondrion inner membrane. In terms of biological role, accessory subunit of the mitochondrial membrane respiratory chain NADH dehydrogenase (Complex I), that is believed to be not involved in catalysis. Complex I functions in the transfer of electrons from NADH to the respiratory chain. The immediate electron acceptor for the enzyme is believed to be ubiquinone. Is required for correct plant growth and development. The protein is NADH dehydrogenase [ubiquinone] 1 beta subcomplex subunit 9 (CIB22) of Arabidopsis thaliana (Mouse-ear cress).